The sequence spans 492 residues: Phosphatidylinositol-glycan biosynthesis class W protein (492 aa).

5 helical membrane-spanning segments follow: residues 26-46 (FILTLMPISVLFQRVVFATFF), 59-79 (FILEFFFIIVPFISAITFTEL), 82-102 (FLIVGMLITCLVVPMFAQKNV), 127-147 (YRAFVMAATCICILAVDFQVF), and 156-176 (TYGISLMDIGVGSVVLSGALV). The segment at 185–216 (IEKQQKKKREEEEDDNDKINKTSSSSSSSSSA) is disordered. N-linked (GlcNAc...) asparagine glycosylation is present at N204. The segment covering 205–216 (KTSSSSSSSSSA) has biased composition (low complexity). The chain crosses the membrane as a helical span at residues 264–284 (YGLHWNFFFTLGFVSISLAFL). The N-linked (GlcNAc...) asparagine glycan is linked to N289. Transmembrane regions (helical) follow at residues 290–310 (ISAILGVVLICVYQFLLNSFG), 331–351 (ICSFVGYLAIYLIGTKIGTEL), 364–384 (FATKLLISSIVFYILWILCEI), and 399–419 (VLAILSINLFNFSINILITLI). N424 carries N-linked (GlcNAc...) asparagine glycosylation. The next 2 helical transmembrane spans lie at 437–457 (LFIFLLGNILTGLINFSMKTI) and 464–484 (SMIIITSYTFALCLLAFILDY).

The protein belongs to the PIGW family.

Its subcellular location is the endoplasmic reticulum membrane. It functions in the pathway glycolipid biosynthesis; glycosylphosphatidylinositol-anchor biosynthesis. Functionally, probable acetyltransferase, which acetylates the inositol ring of phosphatidylinositol during biosynthesis of GPI-anchor. This chain is Phosphatidylinositol-glycan biosynthesis class W protein, found in Dictyostelium discoideum (Social amoeba).